The sequence spans 445 residues: Xylose isomerase (445 aa).

Active-site residues include H107 and D110. Mg(2+) contacts are provided by E238, E274, H277, D302, D313, D315, and D345.

It belongs to the xylose isomerase family. As to quaternary structure, homotetramer. Mg(2+) serves as cofactor.

It localises to the cytoplasm. It catalyses the reaction alpha-D-xylose = alpha-D-xylulofuranose. This chain is Xylose isomerase (xylA), found in Bacillus subtilis (strain 168).